Here is a 201-residue protein sequence, read N- to C-terminus: 3-isopropylmalate dehydratase small subunit (201 aa).

This sequence belongs to the LeuD family. LeuD type 1 subfamily. In terms of assembly, heterodimer of LeuC and LeuD.

The enzyme catalyses (2R,3S)-3-isopropylmalate = (2S)-2-isopropylmalate. The protein operates within amino-acid biosynthesis; L-leucine biosynthesis; L-leucine from 3-methyl-2-oxobutanoate: step 2/4. In terms of biological role, catalyzes the isomerization between 2-isopropylmalate and 3-isopropylmalate, via the formation of 2-isopropylmaleate. This Shewanella denitrificans (strain OS217 / ATCC BAA-1090 / DSM 15013) protein is 3-isopropylmalate dehydratase small subunit.